Reading from the N-terminus, the 644-residue chain is 2-isopropylmalate synthase (644 aa).

The disordered stretch occupies residues 1–40; sequence MTTSESPDAYTESFGAHTIVKPAGPPRVGQPSWNPQRASS. The span at 31–40 shows a compositional bias: polar residues; sequence PSWNPQRASS. The 275-residue stretch at 72 to 346 folds into the Pyruvate carboxyltransferase domain; sequence PLWCAVDLRD…DPQIDFSNID (275 aa). Positions 81, 285, 287, and 321 each coordinate Mg(2+). The interval 491 to 644 is regulatory domain; sequence PVRPLERIRQ…VVSAVNRAAR (154 aa). The stretch at 575–593 is one VNTR1 repeat; sequence VTIASPAQPGEAGRHASDP. The tract at residues 581–612 is disordered; that stretch reads AQPGEAGRHASDPVTIASPAQPGEAGRHASDP. The stretch at 594–612 is one VNTR2 repeat; it reads VTIASPAQPGEAGRHASDP.

Belongs to the alpha-IPM synthase/homocitrate synthase family. LeuA type 2 subfamily. As to quaternary structure, homodimer. Mg(2+) serves as cofactor.

Its subcellular location is the cytoplasm. It carries out the reaction 3-methyl-2-oxobutanoate + acetyl-CoA + H2O = (2S)-2-isopropylmalate + CoA + H(+). It functions in the pathway amino-acid biosynthesis; L-leucine biosynthesis; L-leucine from 3-methyl-2-oxobutanoate: step 1/4. Catalyzes the condensation of the acetyl group of acetyl-CoA with 3-methyl-2-oxobutanoate (2-ketoisovalerate) to form 3-carboxy-3-hydroxy-4-methylpentanoate (2-isopropylmalate). The polypeptide is 2-isopropylmalate synthase (Mycobacterium tuberculosis (strain CDC 1551 / Oshkosh)).